The chain runs to 908 residues: Bifunctional uridylyltransferase/uridylyl-removing enzyme (908 aa).

Residues 1-360 (MFDTPAVFAR…LERIFRRRRR (360 aa)) are uridylyltransferase. Residues 361 to 718 (IKQGYKVVRG…LDPDEDRDAT (358 aa)) form a uridylyl-removing region. The HD domain maps to 477-599 (VDEHTIQTIV…VQTTKRLDLL (123 aa)). ACT domains follow at residues 719 to 801 (RACF…LKSR) and 829 to 904 (IIEV…GAER).

Belongs to the GlnD family. Mg(2+) is required as a cofactor.

The catalysed reaction is [protein-PII]-L-tyrosine + UTP = [protein-PII]-uridylyl-L-tyrosine + diphosphate. It catalyses the reaction [protein-PII]-uridylyl-L-tyrosine + H2O = [protein-PII]-L-tyrosine + UMP + H(+). Uridylyltransferase (UTase) activity is inhibited by glutamine, while glutamine activates uridylyl-removing (UR) activity. Modifies, by uridylylation and deuridylylation, the PII regulatory proteins (GlnB and homologs), in response to the nitrogen status of the cell that GlnD senses through the glutamine level. Under low glutamine levels, catalyzes the conversion of the PII proteins and UTP to PII-UMP and PPi, while under higher glutamine levels, GlnD hydrolyzes PII-UMP to PII and UMP (deuridylylation). Thus, controls uridylylation state and activity of the PII proteins, and plays an important role in the regulation of nitrogen assimilation and metabolism. The sequence is that of Bifunctional uridylyltransferase/uridylyl-removing enzyme from Ruegeria pomeroyi (strain ATCC 700808 / DSM 15171 / DSS-3) (Silicibacter pomeroyi).